Here is a 154-residue protein sequence, read N- to C-terminus: Aspartate carbamoyltransferase regulatory chain (154 aa).

Zn(2+)-binding residues include Cys109, Cys114, Cys138, and Cys141.

Belongs to the PyrI family. Contains catalytic and regulatory chains. It depends on Zn(2+) as a cofactor.

In terms of biological role, involved in allosteric regulation of aspartate carbamoyltransferase. This Yersinia pestis protein is Aspartate carbamoyltransferase regulatory chain.